A 243-amino-acid chain; its full sequence is Pyridoxine 5'-phosphate synthase (243 aa).

N9 provides a ligand contact to 3-amino-2-oxopropyl phosphate. 11 to 12 (DH) serves as a coordination point for 1-deoxy-D-xylulose 5-phosphate. R20 is a 3-amino-2-oxopropyl phosphate binding site. The active-site Proton acceptor is the H45. Residues R47 and H52 each coordinate 1-deoxy-D-xylulose 5-phosphate. E72 acts as the Proton acceptor in catalysis. Residue T102 participates in 1-deoxy-D-xylulose 5-phosphate binding. The Proton donor role is filled by H193. Residues G194 and 215–216 (GH) contribute to the 3-amino-2-oxopropyl phosphate site.

This sequence belongs to the PNP synthase family. Homooctamer; tetramer of dimers.

It localises to the cytoplasm. The enzyme catalyses 3-amino-2-oxopropyl phosphate + 1-deoxy-D-xylulose 5-phosphate = pyridoxine 5'-phosphate + phosphate + 2 H2O + H(+). Its pathway is cofactor biosynthesis; pyridoxine 5'-phosphate biosynthesis; pyridoxine 5'-phosphate from D-erythrose 4-phosphate: step 5/5. Its function is as follows. Catalyzes the complicated ring closure reaction between the two acyclic compounds 1-deoxy-D-xylulose-5-phosphate (DXP) and 3-amino-2-oxopropyl phosphate (1-amino-acetone-3-phosphate or AAP) to form pyridoxine 5'-phosphate (PNP) and inorganic phosphate. This Escherichia coli O157:H7 protein is Pyridoxine 5'-phosphate synthase.